Consider the following 371-residue polypeptide: tRNA-specific 2-thiouridylase MnmA (371 aa).

ATP-binding positions include 12 to 19 (GMSGGVDS) and methionine 38. The interaction with target base in tRNA stretch occupies residues 98–100 (NPD). The active-site Nucleophile is cysteine 103. Cysteine 103 and cysteine 200 form a disulfide bridge. Residue glycine 128 participates in ATP binding. An interaction with tRNA region spans residues 150-152 (KDQ). The active-site Cysteine persulfide intermediate is cysteine 200. Residues 312-313 (RY) are interaction with tRNA.

Belongs to the MnmA/TRMU family. Interacts with TusE.

The protein resides in the cytoplasm. It carries out the reaction S-sulfanyl-L-cysteinyl-[protein] + uridine(34) in tRNA + AH2 + ATP = 2-thiouridine(34) in tRNA + L-cysteinyl-[protein] + A + AMP + diphosphate + H(+). Its function is as follows. Catalyzes the 2-thiolation of uridine at the wobble position (U34) of tRNA(Lys), tRNA(Glu) and tRNA(Gln), leading to the formation of s(2)U34, the first step of tRNA-mnm(5)s(2)U34 synthesis. Sulfur is provided by IscS, via a sulfur-relay system. Binds ATP and its substrate tRNAs. This is tRNA-specific 2-thiouridylase MnmA from Yersinia pestis bv. Antiqua (strain Antiqua).